A 147-amino-acid chain; its full sequence is Small ribosomal subunit protein uS12 (147 aa).

This sequence belongs to the universal ribosomal protein uS12 family. In terms of assembly, part of the 30S ribosomal subunit.

In terms of biological role, with S4 and S5 plays an important role in translational accuracy. Located at the interface of the 30S and 50S subunits. The sequence is that of Small ribosomal subunit protein uS12 from Pyrococcus abyssi (strain GE5 / Orsay).